A 140-amino-acid polypeptide reads, in one-letter code: Ig heavy chain V region 93G7 (140 aa).

Positions 1–19 (MGWSFIFLFLLSVTAGVHS) are cleaved as a signal peptide. The 120-residue stretch at 20–139 (EVQLQQSGAE…WGQGTPLTVS (120 aa)) folds into the Ig-like domain.

In Mus musculus (Mouse), this protein is Ig heavy chain V region 93G7.